Consider the following 467-residue polypeptide: UDP-N-acetylmuramate--L-alanine ligase (467 aa).

114-120 contributes to the ATP binding site; that stretch reads GTHGKTT.

This sequence belongs to the MurCDEF family.

It is found in the cytoplasm. It catalyses the reaction UDP-N-acetyl-alpha-D-muramate + L-alanine + ATP = UDP-N-acetyl-alpha-D-muramoyl-L-alanine + ADP + phosphate + H(+). It functions in the pathway cell wall biogenesis; peptidoglycan biosynthesis. Its function is as follows. Cell wall formation. The sequence is that of UDP-N-acetylmuramate--L-alanine ligase from Nitrobacter winogradskyi (strain ATCC 25391 / DSM 10237 / CIP 104748 / NCIMB 11846 / Nb-255).